We begin with the raw amino-acid sequence, 134 residues long: Biopolymer transport protein exbD2 (134 aa).

At 1-17 (MRLGRRTSKQEEAQIDL) the chain is on the cytoplasmic side. The chain crosses the membrane as a helical span at residues 18-38 (TSMLDIVFIMLIFFIVTSSFV). At 39–134 (RESGVEVNRP…KSIALAAEKP (96 aa)) the chain is on the periplasmic side.

It belongs to the ExbD/TolR family. In terms of assembly, the accessory proteins ExbB and ExbD seem to form a complex with TonB.

It localises to the cell inner membrane. Functionally, involved in the TonB-dependent energy-dependent transport of various receptor-bound substrates. This is Biopolymer transport protein exbD2 (exbD2) from Vibrio cholerae serotype O1 (strain ATCC 39315 / El Tor Inaba N16961).